The primary structure comprises 333 residues: uncharacterized protein (333 aa).

The N-terminal stretch at 1–23 (MSRSFMIILTIMLIALSLGEVLA) is a signal peptide. A helical transmembrane segment spans residues 232–252 (SFFLGVLVTLMILSPVIVYLW).

It is found in the membrane. This is an uncharacterized protein from Pyrococcus abyssi (strain GE5 / Orsay).